We begin with the raw amino-acid sequence, 719 residues long: DNA ligase (719 aa).

NAD(+)-binding positions include 42 to 46, 91 to 92, and glutamate 125; these read DAEYD and SL. Residue lysine 127 is the N6-AMP-lysine intermediate of the active site. NAD(+) is bound by residues arginine 148, glutamate 184, lysine 300, and lysine 324. Positions 429, 432, 447, and 453 each coordinate Zn(2+). A BRCT domain is found at 638 to 719; the sequence is TASSPIAEKI…WMRLIKGHNI (82 aa).

It belongs to the NAD-dependent DNA ligase family. LigA subfamily. The cofactor is Mg(2+). Mn(2+) is required as a cofactor.

It catalyses the reaction NAD(+) + (deoxyribonucleotide)n-3'-hydroxyl + 5'-phospho-(deoxyribonucleotide)m = (deoxyribonucleotide)n+m + AMP + beta-nicotinamide D-nucleotide.. DNA ligase that catalyzes the formation of phosphodiester linkages between 5'-phosphoryl and 3'-hydroxyl groups in double-stranded DNA using NAD as a coenzyme and as the energy source for the reaction. It is essential for DNA replication and repair of damaged DNA. This Bartonella tribocorum (strain CIP 105476 / IBS 506) protein is DNA ligase.